The following is a 609-amino-acid chain: DNA polymerase alpha subunit B (609 aa).

Serine 155 carries the phosphoserine modification. Position 164 is a phosphothreonine (threonine 164). A phosphoserine mark is found at serine 166 and serine 168.

It belongs to the DNA polymerase alpha subunit B family. In terms of assembly, component of the alpha DNA polymerase complex (also known as the alpha DNA polymerase-primase complex) consisting of four subunits: the catalytic subunit PolA1, the regulatory subunit PolA2, and the primase complex subunits Prim1 and Prim2 respectively. PolA1 associates with the DNA primase complex before association with PolA2. Post-translationally, phosphorylated in embryos until cycle 13. Expressed in embryos (at protein level).

It localises to the nucleus. Accessory subunit of the DNA polymerase alpha complex (also known as the alpha DNA polymerase-primase complex) which plays an essential role in the initiation of DNA synthesis. During the S phase of the cell cycle, the DNA polymerase alpha complex (composed of a catalytic subunit PolA1, an accessory subunit PolA2 and two primase subunits, the catalytic subunit Prim1 and the regulatory subunit Prim2) is recruited to DNA at the replicative forks. The primase subunit of the polymerase alpha complex initiates DNA synthesis by oligomerising short RNA primers on both leading and lagging strands. These primers are initially extended by the polymerase alpha catalytic subunit and subsequently transferred to polymerase delta and polymerase epsilon for processive synthesis on the lagging and leading strand, respectively. The chain is DNA polymerase alpha subunit B from Drosophila melanogaster (Fruit fly).